A 422-amino-acid polypeptide reads, in one-letter code: Zinc finger protein 550 (422 aa).

The region spanning 12-83 (VTFKDVAVTF…KRGLSHATCA (72 aa)) is the KRAB domain. Residues 113-158 (LESSTSSDSRLGRARDEEGLLEMQKGKVTPETDLHKETHLGKVSLE) form a disordered region. Basic and acidic residues predominate over residues 122–152 (RLGRARDEEGLLEMQKGKVTPETDLHKETHL). 8 C2H2-type zinc fingers span residues 203 to 225 (YKCK…QRVH), 231 to 253 (YECN…YLIH), 259 to 281 (YKCL…HPIH), 287 to 309 (YECS…NRTH), 315 to 337 (FECK…YIIH), 343 to 365 (YDCM…QRIH), 371 to 393 (YECT…SVIH), and 399 to 421 (YKCI…QRVH).

It belongs to the krueppel C2H2-type zinc-finger protein family.

It localises to the nucleus. May be involved in transcriptional regulation. The sequence is that of Zinc finger protein 550 (ZNF550) from Homo sapiens (Human).